Reading from the N-terminus, the 373-residue chain is ATP phosphoribosyltransferase regulatory subunit (373 aa).

The protein belongs to the class-II aminoacyl-tRNA synthetase family. HisZ subfamily. In terms of assembly, heteromultimer composed of HisG and HisZ subunits.

The protein resides in the cytoplasm. It participates in amino-acid biosynthesis; L-histidine biosynthesis; L-histidine from 5-phospho-alpha-D-ribose 1-diphosphate: step 1/9. In terms of biological role, required for the first step of histidine biosynthesis. May allow the feedback regulation of ATP phosphoribosyltransferase activity by histidine. The polypeptide is ATP phosphoribosyltransferase regulatory subunit (Rhizobium etli (strain CIAT 652)).